We begin with the raw amino-acid sequence, 237 residues long: Phosphoadenosine 5'-phosphosulfate reductase (237 aa).

Residue C231 is the Nucleophile; cysteine thiosulfonate intermediate of the active site.

This sequence belongs to the PAPS reductase family. CysH subfamily.

The protein resides in the cytoplasm. The enzyme catalyses [thioredoxin]-disulfide + sulfite + adenosine 3',5'-bisphosphate + 2 H(+) = [thioredoxin]-dithiol + 3'-phosphoadenylyl sulfate. Its pathway is sulfur metabolism; hydrogen sulfide biosynthesis; sulfite from sulfate: step 3/3. Functionally, catalyzes the formation of sulfite from phosphoadenosine 5'-phosphosulfate (PAPS) using thioredoxin as an electron donor. The chain is Phosphoadenosine 5'-phosphosulfate reductase from Xylella fastidiosa (strain 9a5c).